The primary structure comprises 501 residues: Lysine--tRNA ligase (501 aa).

Mg(2+)-binding residues include E411 and E418.

The protein belongs to the class-II aminoacyl-tRNA synthetase family. In terms of assembly, homodimer. It depends on Mg(2+) as a cofactor.

It is found in the cytoplasm. The catalysed reaction is tRNA(Lys) + L-lysine + ATP = L-lysyl-tRNA(Lys) + AMP + diphosphate. The chain is Lysine--tRNA ligase from Pseudomonas aeruginosa (strain LESB58).